The following is a 249-amino-acid chain: Serine 3-dehydrogenase (249 aa).

6-30 (LITGATSGFGQATARRFVKEGWKVI) serves as a coordination point for NADP(+). Ser-135 lines the substrate pocket. Tyr-148 serves as the catalytic Proton acceptor.

It belongs to the short-chain dehydrogenases/reductases (SDR) family. Homotetramer.

It catalyses the reaction L-serine + NADP(+) = aminoacetaldehyde + CO2 + NADPH. Catalyzes the oxidation of the hydroxyl group of serine to form 2-aminomalonate semialdehyde which is spontaneously converted into 2-aminoacetaldehyde and CO(2). Also acts on D-serine, L-glycerate, D-glycerate and 2-methyl-DL-serine. Does not act on O-methyl-DL-serine and L-threonine. The polypeptide is Serine 3-dehydrogenase (sdh) (Agrobacterium fabrum (strain C58 / ATCC 33970) (Agrobacterium tumefaciens (strain C58))).